The primary structure comprises 320 residues: tRNA pseudouridine synthase B (320 aa).

The active-site Nucleophile is D41. Disordered stretches follow at residues 116–136 and 259–284; these read PPQV…ARRG and DQCQ…DPSA. The segment covering 125-136 has biased composition (basic and acidic residues); that stretch reads QGERAHARARRG. The segment covering 270–284 has biased composition (polar residues); the sequence is SDQQESAPNQTDPSA.

It belongs to the pseudouridine synthase TruB family. Type 1 subfamily.

The catalysed reaction is uridine(55) in tRNA = pseudouridine(55) in tRNA. In terms of biological role, responsible for synthesis of pseudouridine from uracil-55 in the psi GC loop of transfer RNAs. This chain is tRNA pseudouridine synthase B, found in Prochlorococcus marinus (strain MIT 9313).